A 159-amino-acid chain; its full sequence is SsrA-binding protein (159 aa).

The interval 134 to 159 (KLHDKRETSKERDWNRQKNRLLKERG) is disordered. Basic and acidic residues predominate over residues 137–159 (DKRETSKERDWNRQKNRLLKERG).

It belongs to the SmpB family.

It is found in the cytoplasm. Its function is as follows. Required for rescue of stalled ribosomes mediated by trans-translation. Binds to transfer-messenger RNA (tmRNA), required for stable association of tmRNA with ribosomes. tmRNA and SmpB together mimic tRNA shape, replacing the anticodon stem-loop with SmpB. tmRNA is encoded by the ssrA gene; the 2 termini fold to resemble tRNA(Ala) and it encodes a 'tag peptide', a short internal open reading frame. During trans-translation Ala-aminoacylated tmRNA acts like a tRNA, entering the A-site of stalled ribosomes, displacing the stalled mRNA. The ribosome then switches to translate the ORF on the tmRNA; the nascent peptide is terminated with the 'tag peptide' encoded by the tmRNA and targeted for degradation. The ribosome is freed to recommence translation, which seems to be the essential function of trans-translation. The chain is SsrA-binding protein from Sinorhizobium fredii (strain NBRC 101917 / NGR234).